The sequence spans 666 residues: N-acetylgalactosaminyltransferase 6 (666 aa).

Residues 1-11 lie on the Cytoplasmic side of the membrane; that stretch reads MRRPNLKWIVK. The helical; Signal-anchor for type II membrane protein transmembrane segment at 12-31 threads the bilayer; that stretch reads ASLLLLISLTLFVLITSWIS. Residues 32-666 are Lumenal-facing; the sequence is STPYTNKPVH…NYSQDLVLSL (635 aa). Positions 90-126 are disordered; that stretch reads EPVEEEVDNPHPADDEPQQQPQEELQMAAPADASVKK. Low complexity predominate over residues 107–120; the sequence is QQQPQEELQMAAPA. A glycan (N-linked (GlcNAc...) asparagine) is linked at N181. Disulfide bonds link C192/C421, C412/C491, C531/C548, C577/C594, and C621/C636. Residues 201–311 form a catalytic subdomain A region; the sequence is LPTVSVIIIF…YNWLPPLLEP (111 aa). The substrate site is built by D242 and R272. A glycan (N-linked (GlcNAc...) asparagine) is linked at N285. Residue D295 coordinates Mn(2+). Residue S296 participates in substrate binding. H297 serves as a coordination point for Mn(2+). Residues 367–429 are catalytic subdomain B; sequence PFKSPIMAGG…PCSRIGHIYR (63 aa). Position 398 (W398) interacts with substrate. H426 contributes to the Mn(2+) binding site. R429 is a binding site for substrate. A Ricin B-type lectin domain is found at 518–648; the sequence is AMGALQNVGN…DNRFQQWNFG (131 aa). 2 N-linked (GlcNAc...) asparagine glycosylation sites follow: N651 and N657.

The protein belongs to the glycosyltransferase 2 family. GalNAc-T subfamily. It depends on Mn(2+) as a cofactor. As to expression, expressed during oogenesis, in the somatically derived follicle cells that surround the developing oocyte, which are involved in the maturation of the oocyte and construction of the egg shell, as well as playing a role in subsequent embryonic pattern formation. Expressed in the salivary glands from embryonic stage 12 onwards, becoming stronger at stage 13. During embryonic stages 12-13, also expressed in the posterior midgut and hindgut. During embryonic stages 14-15, expression continues in the hindgut. Expression is detected in the epidermis and antennomaxillary complex during embryonic stages 16-17. In third instar larvae, ubiquitously expressed in wing, eye-antennal, leg and haltere imaginal disks.

It localises to the golgi apparatus membrane. It catalyses the reaction L-seryl-[protein] + UDP-N-acetyl-alpha-D-galactosamine = a 3-O-[N-acetyl-alpha-D-galactosaminyl]-L-seryl-[protein] + UDP + H(+). The catalysed reaction is L-threonyl-[protein] + UDP-N-acetyl-alpha-D-galactosamine = a 3-O-[N-acetyl-alpha-D-galactosaminyl]-L-threonyl-[protein] + UDP + H(+). It functions in the pathway protein modification; protein glycosylation. Functionally, glycopeptide transferase involved in O-linked oligosaccharide biosynthesis, which catalyzes the transfer of an N-acetyl-D-galactosamine residue to an already glycosylated peptide. In contrast to other proteins of the family, it does not act as a peptide transferase that transfers GalNAc onto serine or threonine residue on the protein receptor, but instead requires the prior addition of a GalNAc on a peptide before adding additional GalNAc moieties. Some peptide transferase activity is however not excluded, considering that its appropriate peptide substrate may remain unidentified. Prefers the diglycosylated Muc5AC-3/13 as substrate. Might have a role in protein O-glycosylation in the Golgi and thereby in establishing and/or maintaining a proper secretory apparatus structure. This chain is N-acetylgalactosaminyltransferase 6, found in Drosophila melanogaster (Fruit fly).